The sequence spans 191 residues: Xanthine phosphoribosyltransferase (191 aa).

Xanthine is bound by residues leucine 20 and asparagine 27. Alanine 128–alanine 132 is a binding site for 5-phospho-alpha-D-ribose 1-diphosphate. Position 156 (lysine 156) interacts with xanthine.

Belongs to the purine/pyrimidine phosphoribosyltransferase family. Xpt subfamily. As to quaternary structure, homodimer.

It is found in the cytoplasm. It carries out the reaction XMP + diphosphate = xanthine + 5-phospho-alpha-D-ribose 1-diphosphate. It functions in the pathway purine metabolism; XMP biosynthesis via salvage pathway; XMP from xanthine: step 1/1. In terms of biological role, converts the preformed base xanthine, a product of nucleic acid breakdown, to xanthosine 5'-monophosphate (XMP), so it can be reused for RNA or DNA synthesis. The chain is Xanthine phosphoribosyltransferase from Levilactobacillus brevis (strain ATCC 367 / BCRC 12310 / CIP 105137 / JCM 1170 / LMG 11437 / NCIMB 947 / NCTC 947) (Lactobacillus brevis).